The sequence spans 376 residues: N-acetyldiaminopimelate deacetylase (376 aa).

Residue Asp-70 is part of the active site. Glu-129 serves as the catalytic Proton acceptor.

Belongs to the peptidase M20A family. N-acetyldiaminopimelate deacetylase subfamily.

The enzyme catalyses N-acetyl-(2S,6S)-2,6-diaminopimelate + H2O = (2S,6S)-2,6-diaminopimelate + acetate. Its pathway is amino-acid biosynthesis; L-lysine biosynthesis via DAP pathway; LL-2,6-diaminopimelate from (S)-tetrahydrodipicolinate (acetylase route): step 3/3. Its function is as follows. Catalyzes the conversion of N-acetyl-diaminopimelate to diaminopimelate and acetate. The protein is N-acetyldiaminopimelate deacetylase of Bacillus pumilus (strain SAFR-032).